Here is a 30-residue protein sequence, read N- to C-terminus: Ornithine carbamoyltransferase (30 aa).

It belongs to the aspartate/ornithine carbamoyltransferase superfamily. OTCase family.

Its subcellular location is the cytoplasm. The enzyme catalyses carbamoyl phosphate + L-ornithine = L-citrulline + phosphate + H(+). It functions in the pathway amino-acid biosynthesis; L-arginine biosynthesis; L-arginine from L-ornithine and carbamoyl phosphate: step 1/3. Functionally, has vitronectin and fibronectin-binding activity. This chain is Ornithine carbamoyltransferase (argF), found in Staphylococcus epidermidis.